The sequence spans 179 residues: Large ribosomal subunit protein uL5 (179 aa).

It belongs to the universal ribosomal protein uL5 family. As to quaternary structure, part of the 50S ribosomal subunit; part of the 5S rRNA/L5/L18/L25 subcomplex. Contacts the 5S rRNA and the P site tRNA. Forms a bridge to the 30S subunit in the 70S ribosome.

Functionally, this is one of the proteins that bind and probably mediate the attachment of the 5S RNA into the large ribosomal subunit, where it forms part of the central protuberance. In the 70S ribosome it contacts protein S13 of the 30S subunit (bridge B1b), connecting the 2 subunits; this bridge is implicated in subunit movement. Contacts the P site tRNA; the 5S rRNA and some of its associated proteins might help stabilize positioning of ribosome-bound tRNAs. The sequence is that of Large ribosomal subunit protein uL5 from Yersinia pestis.